The primary structure comprises 1272 residues: Fused isobutyryl-CoA mutase (1272 aa).

One can recognise a B12-binding domain in the interval 20 to 158 (RLRFVTAAAL…ARCAEGARAA (139 aa)). Residue histidine 33 participates in adenosylcob(III)alamin binding. The GTPase chaperone MeaI stretch occupies residues 163-536 (ESQVGAWAAE…YRHVAEALRK (374 aa)). Residues 193 to 240 (GAVARNPSSEASRVAAAGRGDHLDRGVRAASTADTADTANTANTANTA) are disordered. Residues 221–240 (AASTADTADTANTANTANTA) are compositionally biased toward low complexity. Position 334-339 (334-339 (GAGKSS)) interacts with GTP. Residues serine 338, isoleucine 363, aspartate 364, and aspartate 377 each contribute to the Mg(2+) site. Arginine 380 contacts GTP. 2 residues coordinate Mg(2+): glutamate 429 and threonine 430. Position 476 to 479 (476 to 479 (NKFD)) interacts with GTP. A linker region spans residues 537-758 (HGLRSGGGRL…MLDNLPGYFP (222 aa)). Composition is skewed to low complexity over residues 614–631 (TVATSASPGASASSKANA) and 639–663 (ANASPGANTTANSNASATSGTATPT). A disordered region spans residues 614–667 (TVATSASPGASASSKANACTSTSSKANASPGANTTANSNASATSGTATPTDALN). Residues phenylalanine 766, arginine 801, arginine 907, tyrosine 951, serine 1000, arginine 1035, and lysine 1040 each coordinate substrate. 2 residues coordinate GTP: glutamate 1152 and asparagine 1271.

The protein belongs to the IcmF family. In terms of assembly, homodimer. It depends on adenosylcob(III)alamin as a cofactor. Mg(2+) is required as a cofactor.

The enzyme catalyses 2-methylpropanoyl-CoA = butanoyl-CoA. It catalyses the reaction GTP + H2O = GDP + phosphate + H(+). Functionally, catalyzes the reversible interconversion of isobutyryl-CoA and n-butyryl-CoA, using radical chemistry. Also exhibits GTPase activity, associated with its G-protein domain (MeaI) that functions as a chaperone that assists cofactor delivery and proper holo-enzyme assembly. Does not exhibit methylmalonyl-CoA mutase (MCM) activity. This chain is Fused isobutyryl-CoA mutase, found in Paraburkholderia xenovorans (strain LB400).